A 254-amino-acid polypeptide reads, in one-letter code: Tumor necrosis factor ligand superfamily member 9 (254 aa).

Over 1 to 28 (MEYASDASLDPEAPWPPAPRARACRVLP) the chain is Cytoplasmic. The helical; Signal-anchor for type II membrane protein transmembrane segment at 29–49 (WALVAGLLLLLLLAAACAVFL) threads the bilayer. Topologically, residues 50 to 254 (ACPWAVSGAR…PAGLPSPRSE (205 aa)) are extracellular. The region spanning 91-240 (MFAQLVAQNV…GATVLGLFRV (150 aa)) is the THD domain.

The protein belongs to the tumor necrosis factor family. In terms of assembly, homotrimer. As to expression, expressed in brain, placenta, lung, skeletal muscle and kidney.

The protein resides in the membrane. Functionally, cytokine that binds to TNFRSF9. Induces the proliferation of activated peripheral blood T-cells. May have a role in activation-induced cell death (AICD). May play a role in cognate interactions between T-cells and B-cells/macrophages. The chain is Tumor necrosis factor ligand superfamily member 9 (TNFSF9) from Homo sapiens (Human).